Consider the following 72-residue polypeptide: DNA-directed RNA polymerase subunit omega (72 aa).

It belongs to the RNA polymerase subunit omega family. As to quaternary structure, the RNAP catalytic core consists of 2 alpha, 1 beta, 1 beta' and 1 omega subunit. When a sigma factor is associated with the core the holoenzyme is formed, which can initiate transcription.

It catalyses the reaction RNA(n) + a ribonucleoside 5'-triphosphate = RNA(n+1) + diphosphate. Promotes RNA polymerase assembly. Latches the N- and C-terminal regions of the beta' subunit thereby facilitating its interaction with the beta and alpha subunits. This Laribacter hongkongensis (strain HLHK9) protein is DNA-directed RNA polymerase subunit omega.